Reading from the N-terminus, the 568-residue chain is Putative ABC transporter ATP-binding protein EF_2153 (568 aa).

2 consecutive ABC transporter domains span residues 6-247 and 301-535; these read ITFN…GIRE and LRLE…ASLK. ATP contacts are provided by residues 40–47 and 335–342; these read GPSGSGKS and GKNGAGKS.

It belongs to the ABC transporter superfamily.

The protein localises to the cell membrane. Probably part of an ABC transporter complex. Responsible for energy coupling to the transport system. In Enterococcus faecalis (strain ATCC 700802 / V583), this protein is Putative ABC transporter ATP-binding protein EF_2153.